Here is a 503-residue protein sequence, read N- to C-terminus: MASGDLYEVERIVDKRKNKKGKWEYLIRWKGYGSTEDTWEPEHHLLHCEEFIDEFNGLHLSKDKRVKSGKQAGASKLLRDARGLPVERLSHRPLEPGKSKPSSHKRKRVNSPLSRPKKGSSGKAPDRATKTVSYRTTPSGLQIMPLKKAQNGLENGDAGSEKDESHFGNGSHQPDLELNDQLGEQEASDCDGTHSALVENGVGSALTNGGLNLHSPVKRKLETEKDYVFDKRLRYSVRQNESNCRFRDIVVRKEEGFTHILLSSQTSDNNALTPEIMKEVRRALCNAATDDSKLLLLSAVGSVFCSGLDYSYLIGRLSSDRRKESTRIAEAIRDFVKAFIQFKKPIVVAINGPALGLGASILPLCDIVWASEKAWFQTPYATIRLTPAGCSSYTFPQILGVALANEMLFCGRKLTAQEACSRGLVSQVFWPTTFSQEVMLRVKEMASCSAVVLEESKCLVRSFLKSVLEEVNEKECVMLKQLWSSSKGLDSLFSYLQDKIYEV.

Positions 7 to 67 (YEVERIVDKR…LHLSKDKRVK (61 aa)) constitute a Chromo domain. A disordered region spans residues 66-177 (VKSGKQAGAS…GNGSHQPDLE (112 aa)). The span at 88 to 98 (RLSHRPLEPGK) shows a compositional bias: basic and acidic residues. Basic residues predominate over residues 101 to 120 (PSSHKRKRVNSPLSRPKKGS). The segment covering 130–140 (KTVSYRTTPSG) has biased composition (polar residues).

Interacts (via chromo domain) with histone H3K9me3.

It localises to the nucleus. In Mus musculus (Mouse), this protein is Chromodomain Y-like protein 2 (Cdyl2).